Reading from the N-terminus, the 637-residue chain is MIKVTLKDGKVMEFENTTTPGDVAKAISPGLYKKAISAKINGKRAELMTNIDKDCNLEILTFDDEDGKWTLRHTASHILAQAIKRLYPEAKLAIGPAIDSGFYYDIDADFSFTEEMFAKIEKEMNKIIKENLKLERFELPREKAIEYMEEKKEPYKVELIKDLPEDAVISFYKQGEFVDLCAGPHVESTAKVKVIKLMSVAGAYWRGNEKNKMLQRIYGTAFTKKADLDDYINMLEEAKKRDHRKIGKELDLFTMHEEGPGFPFFHPKGMVLKNLLLNYWREVHDKAGYDEISTPIILNEALWHQSGHWDHYKENMYFTKIDEADYAIKPMNCPGSILVYKDNIHSYRELPIKLAEIGLVHRHEKSGALHGLMRVRCFNQDDAHIFMTKEQITEEILGVIKLIDSFYKVFGFEYYVELSTRPEDSMGSDEDWEAATNGLINALNAANLEYIVNEGDGAFYGPKIDFHLKDCIGRTWQCGTIQLDFQMPERFDINYIGADGEKHRPVMVHRVVFGSIERFIGILIEHYAGAFPTWLAPVQVKVMNITDSQVEYVDAISEKLKEAGIRVEKDVRNEKIGYKIREAQLKKVPYMIVIGDKEIKEGIISVRSRKEGDLGSMNIEDFIFRINAEVKEKISSI.

One can recognise a TGS domain in the interval 1–61 (MIKVTLKDGK…DKDCNLEILT (61 aa)). The interval 242-532 (DHRKIGKELD…LIEHYAGAFP (291 aa)) is catalytic. Zn(2+) is bound by residues cysteine 333, histidine 384, and histidine 509.

The protein belongs to the class-II aminoacyl-tRNA synthetase family. Homodimer. Zn(2+) serves as cofactor.

Its subcellular location is the cytoplasm. The catalysed reaction is tRNA(Thr) + L-threonine + ATP = L-threonyl-tRNA(Thr) + AMP + diphosphate + H(+). Catalyzes the attachment of threonine to tRNA(Thr) in a two-step reaction: L-threonine is first activated by ATP to form Thr-AMP and then transferred to the acceptor end of tRNA(Thr). Also edits incorrectly charged L-seryl-tRNA(Thr). The chain is Threonine--tRNA ligase from Clostridium acetobutylicum (strain ATCC 824 / DSM 792 / JCM 1419 / IAM 19013 / LMG 5710 / NBRC 13948 / NRRL B-527 / VKM B-1787 / 2291 / W).